Consider the following 490-residue polypeptide: 7-ethoxycoumarin O-deethylase (490 aa).

C432 is a heme binding site.

Belongs to the cytochrome P450 family. Heme is required as a cofactor.

Capable of dealkylating a model xenobiotic compound, 7-ethoxycoumarin. Metabolizes with high efficiency a wide range of xenobiotics, including alkoxycoumarins, alkoxyresorufins, and several herbicides of the class of phenylureas. Catalyzes the double N-dealkylation (oxidative N-demethylation) of phenylureas such as chlortoluron and isoproturon with turnover rates comparable to those reported for physiological substrates and produces non-phytotoxic compounds. Could be used for control of herbicide tolerance and selectivity, as well as soil and groundwater bioremediation. This chain is 7-ethoxycoumarin O-deethylase (CYP76B1), found in Helianthus tuberosus (Jerusalem artichoke).